Reading from the N-terminus, the 2126-residue chain is Phthioceranic/hydroxyphthioceranic acid synthase (2126 aa).

Positions Val-24–Gln-447 constitute a Ketosynthase family 3 (KS3) domain. Cys-196 functions as the Acyl-thioester intermediate; for beta-ketoacyl synthase activity in the catalytic mechanism. Active-site for beta-ketoacyl synthase activity residues include His-331 and His-367. Residues Pro-449 to Asp-549 form a linker domain (LD) region. The tract at residues Arg-550–Glu-849 is acyltransferase (AT). Ser-641 (acyl-ester intermediate; for acyltransferase activity) is an active-site residue. Positions Ser-909–Thr-1191 are dehydratase (DH). The interval His-914–Val-1032 is N-terminal hotdog fold. The region spanning His-914 to Lys-1198 is the PKS/mFAS DH domain. The Proton acceptor; for dehydratase activity role is filled by His-947. The tract at residues Pro-1051–Lys-1198 is C-terminal hotdog fold. Asp-1115 functions as the Proton donor; for dehydratase activity in the catalytic mechanism. The tract at residues Lys-1227–Asp-1398 is pseudo beta-ketoacyl reductase (PsiKR). Residues Ser-1426–Ile-1750 are enoylreductase (ER). A beta-ketoacyl reductase (KR) region spans residues Gly-1772–Phe-2019. NADP(+)-binding positions include Leu-1780–Leu-1783, Ser-1803–Gln-1806, Asp-1831–Ile-1832, and Phe-1904–Ser-1905. In terms of domain architecture, Carrier spans Asp-2040–Gln-2126. Ser-2075 is subject to O-(pantetheine 4'-phosphoryl)serine.

The cofactor is pantetheine 4'-phosphate.

The catalysed reaction is hexadecanoyl-[(hydroxy)phthioceranic acid synthase] + 7 (S)-methylmalonyl-CoA + 14 NADPH + 21 H(+) = C37-phthioceranyl-[(hydroxy)phthioceranic acid synthase] + 7 CO2 + 14 NADP(+) + 7 CoA + 7 H2O. It carries out the reaction hexadecanoyl-[(hydroxy)phthioceranic acid synthase] + 8 (S)-methylmalonyl-CoA + 16 NADPH + 24 H(+) = C40-phthioceranyl-[(hydroxy)phthioceranic acid synthase] + 8 CO2 + 16 NADP(+) + 8 CoA + 8 H2O. It functions in the pathway lipid metabolism; fatty acid biosynthesis. It participates in glycolipid metabolism; sulfolipid-1 biosynthesis. Functionally, involved in sulfolipid-1 biosynthesis. Catalyzes the synthesis of the hepta- and octamethyl phthioceranic and hydroxyphthioceranic acids, the methyl-branched acyl constituents of sulfolipids. The chain is Phthioceranic/hydroxyphthioceranic acid synthase (pks2) from Mycobacterium bovis (strain ATCC BAA-935 / AF2122/97).